The sequence spans 209 residues: Dephospho-CoA kinase (209 aa).

A DPCK domain is found at 13–209; the sequence is RIGLTGGIAT…AIEKVVVAEN (197 aa). Position 21–26 (21–26) interacts with ATP; the sequence is ATGKST.

The protein belongs to the CoaE family.

It is found in the cytoplasm. It catalyses the reaction 3'-dephospho-CoA + ATP = ADP + CoA + H(+). Its pathway is cofactor biosynthesis; coenzyme A biosynthesis; CoA from (R)-pantothenate: step 5/5. Catalyzes the phosphorylation of the 3'-hydroxyl group of dephosphocoenzyme A to form coenzyme A. This is Dephospho-CoA kinase from Synechococcus elongatus (strain ATCC 33912 / PCC 7942 / FACHB-805) (Anacystis nidulans R2).